Reading from the N-terminus, the 388-residue chain is Gastricsin (388 aa).

The first 16 residues, 1–16, serve as a signal peptide directing secretion; it reads MKWMVVVLVCLQLLEA. Residues 17–59 constitute a propeptide, activation peptide; it reads AVVKVPLKKFKSIRETMKEKGLLGEFLRTHKYDPAWKYRFGDL. The Peptidase A1 domain maps to 73-385; that stretch reads YFGEISIGTP…DLGNNRVGFA (313 aa). The active site involves D91. 2 disulfide bridges follow: C104–C109 and C267–C271. Residue D276 is part of the active site. Cysteines 310 and 343 form a disulfide.

This sequence belongs to the peptidase A1 family.

It localises to the secreted. The catalysed reaction is More restricted specificity than pepsin A, but shows preferential cleavage at Tyr-|-Xaa bonds. High activity on hemoglobin.. In terms of biological role, hydrolyzes a variety of proteins. The chain is Gastricsin (PGC) from Homo sapiens (Human).